A 185-amino-acid polypeptide reads, in one-letter code: HTH-type transcriptional regulator Hpr (185 aa).

The 145-residue stretch at 13–157 (AMIFSQRIAQ…LIAILRNIYG (145 aa)) folds into the HTH marR-type domain. The H-T-H motif DNA-binding region spans 63–86 (ISEIAKFGVMHVSTAFNFSKKLEE).

Homodimer.

Its function is as follows. Negative regulator of protease production and sporulation. The protein is HTH-type transcriptional regulator Hpr of Bacillus anthracis (strain CDC 684 / NRRL 3495).